We begin with the raw amino-acid sequence, 950 residues long: Protocadherin alpha-9 (950 aa).

The first 29 residues, 1 to 29 (MLYSSRGDPEGQPLLLSLLILAMWVVGSG), serve as a signal peptide directing secretion. Cadherin domains follow at residues 30 to 133 (QLHY…PPVF), 134 to 242 (PATQ…APVF), 243 to 350 (DRTL…APQL), 351 to 455 (TIKT…APAF), 456 to 565 (AQPE…APAL), and 588 to 678 (GVVV…APKS). Residues 30-697 (QLHYSVPEEA…GPEVTLVDVN (668 aa)) lie on the Extracellular side of the membrane. 2 N-linked (GlcNAc...) asparagine glycosylation sites follow: Asn254 and Asn265. An N-linked (GlcNAc...) asparagine glycan is attached at Asn548. The chain crosses the membrane as a helical span at residues 698 to 718 (VYLIIAICAVSSLLVLTLLLY). Topologically, residues 719-950 (TVLRCSAMPT…GNSTTDNSDQ (232 aa)) are cytoplasmic. One copy of the PXXP 1 repeat lies at 734 to 737 (PGKP). The tract at residues 734–894 (PGKPTLVCSS…PDKFIIPGSP (161 aa)) is 5 X 4 AA repeats of P-X-X-P. 2 disordered regions span residues 759–808 (CSGE…DWRY) and 827–950 (ILRA…NSDQ). Residues 789–798 (PSASSDSSGK) show a composition bias toward polar residues. 4 PXXP repeats span residues 799-802 (PRQP), 832-835 (PGGP), 873-876 (PGNP), and 891-894 (PGSP). Over residues 909-923 (DKSDFITFGKKEETK) the composition is skewed to basic and acidic residues.

The protein localises to the cell membrane. Potential calcium-dependent cell-adhesion protein. May be involved in the establishment and maintenance of specific neuronal connections in the brain. This chain is Protocadherin alpha-9 (PCDHA9), found in Pan troglodytes (Chimpanzee).